A 144-amino-acid polypeptide reads, in one-letter code: Large ribosomal subunit protein uL22 (144 aa).

Positions 1–38 (MAETQTTKKGAKRVRQPVPARRSKPNRPAKAAPGPHAS) are disordered. Residues 9-27 (KGAKRVRQPVPARRSKPNR) show a composition bias toward basic residues.

The protein belongs to the universal ribosomal protein uL22 family. As to quaternary structure, part of the 50S ribosomal subunit.

This protein binds specifically to 23S rRNA; its binding is stimulated by other ribosomal proteins, e.g. L4, L17, and L20. It is important during the early stages of 50S assembly. It makes multiple contacts with different domains of the 23S rRNA in the assembled 50S subunit and ribosome. Its function is as follows. The globular domain of the protein is located near the polypeptide exit tunnel on the outside of the subunit, while an extended beta-hairpin is found that lines the wall of the exit tunnel in the center of the 70S ribosome. The polypeptide is Large ribosomal subunit protein uL22 (Anaeromyxobacter sp. (strain Fw109-5)).